Reading from the N-terminus, the 1009-residue chain is Ulvan lyase, long isoform (1009 aa).

The N-terminal stretch at 1-32 (MTAQKSKYFNRIMTMNTLLFSLLTVGFSQAYA) is a signal peptide. Residue 137 to 138 (SH) coordinates substrate. The active-site Proton donor/acceptor is the H138. 3 residues coordinate Ca(2+): D200, D210, and K212. Residues Y291 and R308 each contribute to the substrate site. The Ca(2+) site is built by D311, D314, and Y316. Y372 is a substrate binding site.

It belongs to the polysaccharide lyase 24 family.

Ulvan lyase involved in ulvan degradation. Ulvan is the main polysaccharide component of the Ulvales (green seaweed) cell wall. It is composed of disaccharide building blocks comprising 3-sulfated rhamnose (Rha3S) linked to D-glucuronic acid (GlcA), L-iduronic acid (IduA), or D-xylose (Xyl). Ulvan lyase catalyzes preferentially the endolytic cleavage of the glycosidic bond between Rha3S and the uronic acid GlcA, but not IduA, producing oligosaccharides that have unsaturated 4-deoxy-L-threo-hex-4-enopyranosiduronic acid (deltaUA) at the non-reducing end. The most abundant end products in the degradation of the ulvan polysaccharide were deltaUA-Rha3S disaccharides and deltaUA-Rha3S-IduA-Rha3S and deltaUA-Rha3S-Xyl-Rha3S tetrasaccharides. The protein is Ulvan lyase, long isoform (ullA) of Glaciecola sp. (strain KUL10).